The following is a 2131-amino-acid chain: MTEDSDSISEEERSLFRPFTRESLVQIEQRIAAEHEKQKELERKRAEGEVPQYGRKKKQKEIRYDDEDEDEGPQPDPTLEQGVPIPVRLQGSFPPELASTPLEDIDPYYSNVLTFVVVSKGKDIFRFSASKAMWMLDPFNPIRRVAIYILVHPLFSLFIITTILVNCILMIMPTTPTVESTEVIFTGIYTFESAVKVMARGFILCPFTYLRDAWNWLDFVVIALAYVTMGIDLGNLAALRTFRVLRALKTVAIVPGLKTIVGAVIESVKNLRDVIILTMFSLSVFALMGLQIYMGVLTQKCIKKFPLDGSWGNLTDENWDYHNRNSSNWYSEDEGISFPLCGNISGAGQCDDDYVCLQGFGPNPNYGYTSFDSFGWAFLSAFRLMTQDFWEDLYQLVLRAAGPWHMLFFIVIIFLGSFYLVNLILAIVAMSYDELQKKAEEEEAAEEEAIREAEEAAAAKAAKLEERANAQAQAAADAAAAEEAALHPEMAKSPTYSCISYELFVGGEKGNDDNNKEKMSIRSVEVESESVSVIQRQPAPTTAHQATKVRKVSTTSLSLPGSPFNIRRGSRSSHKYTIRNGRGRFGIPGSDRKPLVLSTYQDAQQHLPYADDSNAVTPMSEENGAIIVPVYYGNLGSRHSSYTSHQSRISYTSHGDLLGGMAVMGVSTMTKESKLRNRNTRNQSVGATNGGTTCLDTNHKLDHRDYEIGLECTDEAGKIKHHDNPFIEPVQTQTVVDMKDVMVLNDIIEQAAGRHSRASDRGVSVYYFPTEDDDEDGPTFKDKALEVILKGIDVFCVWDCCWVWLKFQEWVSLIVFDPFVELFITLCIVVNTMFMAMDHHDMNKEMERVLKSGNYFFTATFAIEATMKLMAMSPKYYFQEGWNIFDFIIVALSLLELGLEGVQGLSVLRSFRLLRVFKLAKSWPTLNLLISIMGRTMGALGNLTFVLCIIIFIFAVMGMQLFGKNYHDHKDRFPDGDLPRWNFTDFMHSFMIVFRVLCGEWIESMWDCMYVGDVSCIPFFLATVVIGNLVVLNLFLALLLSNFGSSSLSAPTADNDTNKIAEAFNRIGRFKSWVKRNIADCFKLIRNKLTNQISDQPSGERTNQISWIWSEGKGVCRCISAEHGDNELELGHDEILADGLIKKGIKEQTQLEVAIGDGMEFTIHGDMKNNKPKKSKYLNNATDDDTASINSYGSHKNRPFKDESHKGSAETMEGEEKRDASKEDLGLDEELDEEGECEEGPLDGDIIIHAHDEDILDEYPADCCPDSYYKKFPILAGDDDSPFWQGWGNLRLKTFQLIENKYFETAVITMILMSSLALALEDVHLPQRPILQDILYYMDRIFTVIFFLEMLIKWLALGFKVYFTNAWCWLDFVIVMVSLINFVASLVGAGGIQAFKTMRTLRALRPLRAMSRMQGMRVVVNALVQAIPSIFNVLLVCLIFWLIFAIMGVQLFAGKYFKCEDMNGTKLSHEIIPNRNACESENYTWVNSAMNFDHVGNAYLCLFQVATFKGWIQIMNDAIDSREVDKQPIRETNIYMYLYFVFFIIFGSFFTLNLFIGVIIDNFNEQKKKAGGSLEMFMTEDQKKYYNAMKKMGSKKPLKAIPRPRWRPQAIVFEIVTDKKFDIIIMLFIGLNMFTMTLDRYDASDTYNAVLDYLNAIFVVIFSSECLLKIFALRYHYFIEPWNLFDVVVVILSILGLVLSDIIEKYFVSPTLLRVVRVAKVGRVLRLVKGAKGIRTLLFALAMSLPALFNICLLLFLVMFIFAIFGMSFFMHVKEKSGINDVYNFKTFGQSMILLFQMSTSAGWDGVLDAIINEEACDPPDNDKGYPGNCGSATVGITFLLSYLVISFLIVINMYIAVILENYSQATEDVQEGLTDDDYDMYYEIWQQFDPEGTQYIRYDQLSEFLDVLEPPLQIHKPNKYKIISMDIPICRGDLMYCVDILDALTKDFFARKGNPIEETGEIGEIAARPDTEGYEPVSSTLWRQREEYCARLIQHAWRKHKARGEGGGSFEPDTDHGDGGDPDAGDPAPDEATDGDAPAGGDGSVNGTAEGAADADESNVNSPGEDAAAAAAAAAAAAAAGTTTAGSPGAGSAGRQTAVLVESDGFVTKNGHKVVIHSRSPSITSRTADV.

The Cytoplasmic portion of the chain corresponds to 1 to 148 (MTEDSDSISE…FNPIRRVAIY (148 aa)). Residues 35 to 48 (HEKQKELERKRAEG) show a composition bias toward basic and acidic residues. The disordered stretch occupies residues 35–84 (HEKQKELERKRAEGEVPQYGRKKKQKEIRYDDEDEDEGPQPDPTLEQGVP). Residues 64-73 (YDDEDEDEGP) show a composition bias toward acidic residues. One copy of the I repeat lies at 134-467 (WMLDPFNPIR…AAKAAKLEER (334 aa)). A helical transmembrane segment spans residues 149-172 (ILVHPLFSLFIITTILVNCILMIM). Over 173 to 180 (PTTPTVES) the chain is Extracellular. The chain crosses the membrane as a helical span at residues 181 to 199 (TEVIFTGIYTFESAVKVMA). Residues 200-212 (RGFILCPFTYLRD) are Cytoplasmic-facing. The helical transmembrane segment at 213 to 231 (AWNWLDFVVIALAYVTMGI) threads the bilayer. Over 232–237 (DLGNLA) the chain is Extracellular. A helical; Voltage-sensor transmembrane segment spans residues 238–257 (ALRTFRVLRALKTVAIVPGL). Over 258 to 273 (KTIVGAVIESVKNLRD) the chain is Cytoplasmic. Residues 274–297 (VIILTMFSLSVFALMGLQIYMGVL) form a helical membrane-spanning segment. Residues 298–373 (TQKCIKKFPL…PNYGYTSFDS (76 aa)) lie on the Extracellular side of the membrane. A disulfide bridge connects residues Cys-301 and Cys-350. N-linked (GlcNAc...) asparagine glycans are attached at residues Asn-313, Asn-325, and Asn-343. The pore-forming intramembrane region spans 374–398 (FGWAFLSAFRLMTQDFWEDLYQLVL). The Extracellular segment spans residues 399-405 (RAAGPWH). The chain crosses the membrane as a helical span at residues 406 to 427 (MLFFIVIIFLGSFYLVNLILAI). Residues 428–812 (VAMSYDELQK…VWLKFQEWVS (385 aa)) lie on the Cytoplasmic side of the membrane. Phosphoserine; by PKA occurs at positions 553 and 570. 2 disordered regions span residues 553-572 (STTSLSLPGSPFNIRRGSRS) and 671-691 (KESKLRNRNTRNQSVGATNGG). The segment covering 680-691 (TRNQSVGATNGG) has biased composition (polar residues). An II repeat occupies 799–1069 (DCCWVWLKFQ…IAEAFNRIGR (271 aa)). A helical transmembrane segment spans residues 813 to 837 (LIVFDPFVELFITLCIVVNTMFMAM). The Extracellular segment spans residues 838 to 848 (DHHDMNKEMER). A helical transmembrane segment spans residues 849-873 (VLKSGNYFFTATFAIEATMKLMAMS). Topologically, residues 874–880 (PKYYFQE) are cytoplasmic. The helical transmembrane segment at 881–900 (GWNIFDFIIVALSLLELGLE) threads the bilayer. At 901 to 906 (GVQGLS) the chain is on the extracellular side. The chain crosses the membrane as a helical; Voltage-sensor span at residues 907–926 (VLRSFRLLRVFKLAKSWPTL). The Cytoplasmic portion of the chain corresponds to 927–941 (NLLISIMGRTMGALG). A helical membrane pass occupies residues 942 to 963 (NLTFVLCIIIFIFAVMGMQLFG). Over 964-985 (KNYHDHKDRFPDGDLPRWNFTD) the chain is Extracellular. Asn-982 carries N-linked (GlcNAc...) asparagine glycosylation. Positions 986-1006 (FMHSFMIVFRVLCGEWIESMW) form an intramembrane region, pore-forming. Over 1007 to 1013 (DCMYVGD) the chain is Extracellular. Cys-1008 and Cys-1016 form a disulfide bridge. A helical transmembrane segment spans residues 1014–1041 (VSCIPFFLATVVIGNLVVLNLFLALLLS). The Cytoplasmic portion of the chain corresponds to 1042-1296 (NFGSSSLSAP…WGNLRLKTFQ (255 aa)). Residues 1166 to 1240 (DMKNNKPKKS…LDEEGECEEG (75 aa)) are disordered. Residues 1177–1194 (YLNNATDDDTASINSYGS) are compositionally biased toward polar residues. The segment covering 1199–1225 (PFKDESHKGSAETMEGEEKRDASKEDL) has biased composition (basic and acidic residues). The segment covering 1226-1240 (GLDEELDEEGECEEG) has biased composition (acidic residues). An III repeat occupies 1284 to 1591 (WQGWGNLRLK…QKKYYNAMKK (308 aa)). The helical transmembrane segment at 1297–1320 (LIENKYFETAVITMILMSSLALAL) threads the bilayer. Residues 1321-1334 (EDVHLPQRPILQDI) are Extracellular-facing. The chain crosses the membrane as a helical span at residues 1335-1359 (LYYMDRIFTVIFFLEMLIKWLALGF). The Cytoplasmic portion of the chain corresponds to 1360-1365 (KVYFTN). A helical transmembrane segment spans residues 1366-1387 (AWCWLDFVIVMVSLINFVASLV). Residues 1388–1391 (GAGG) are Extracellular-facing. The helical; Voltage-sensor transmembrane segment at 1392–1413 (IQAFKTMRTLRALRPLRAMSRM) threads the bilayer. Residues 1414-1432 (QGMRVVVNALVQAIPSIFN) lie on the Cytoplasmic side of the membrane. Residues 1433-1454 (VLLVCLIFWLIFAIMGVQLFAG) traverse the membrane as a helical segment. The Extracellular portion of the chain corresponds to 1455–1495 (KYFKCEDMNGTKLSHEIIPNRNACESENYTWVNSAMNFDHV). Residues Asn-1463 and Asn-1482 are each glycosylated (N-linked (GlcNAc...) asparagine). Positions 1496-1517 (GNAYLCLFQVATFKGWIQIMND) form an intramembrane region, pore-forming. Topologically, residues 1518-1533 (AIDSREVDKQPIRETN) are extracellular. A helical transmembrane segment spans residues 1534 to 1560 (IYMYLYFVFFIIFGSFFTLNLFIGVII). Residues 1561–1614 (DNFNEQKKKAGGSLEMFMTEDQKKYYNAMKKMGSKKPLKAIPRPRWRPQAIVFE) are Cytoplasmic-facing. One copy of the IV repeat lies at 1601 to 1862 (IPRPRWRPQA…NMYIAVILEN (262 aa)). Residues 1615 to 1638 (IVTDKKFDIIIMLFIGLNMFTMTL) form a helical membrane-spanning segment. Over 1639–1649 (DRYDASDTYNA) the chain is Extracellular. A helical membrane pass occupies residues 1650-1673 (VLDYLNAIFVVIFSSECLLKIFAL). The Cytoplasmic portion of the chain corresponds to 1674-1679 (RYHYFI). Residues 1680-1703 (EPWNLFDVVVVILSILGLVLSDII) traverse the membrane as a helical segment. Residues 1704-1713 (EKYFVSPTLL) are Extracellular-facing. The chain crosses the membrane as a helical; Voltage-sensor span at residues 1714–1735 (RVVRVAKVGRVLRLVKGAKGIR). Topologically, residues 1736–1750 (TLLFALAMSLPALFN) are cytoplasmic. A helical membrane pass occupies residues 1751–1773 (ICLLLFLVMFIFAIFGMSFFMHV). At 1774–1787 (KEKSGINDVYNFKT) the chain is on the extracellular side. An intramembrane region (pore-forming) is located at residues 1788 to 1810 (FGQSMILLFQMSTSAGWDGVLDA). The Extracellular portion of the chain corresponds to 1811-1835 (IINEEACDPPDNDKGYPGNCGSATV). The chain crosses the membrane as a helical span at residues 1836–1860 (GITFLLSYLVISFLIVINMYIAVIL). Topologically, residues 1861-2131 (ENYSQATEDV…PSITSRTADV (271 aa)) are cytoplasmic. The EF-hand domain maps to 1877–1912 (DDYDMYYEIWQQFDPEGTQYIRYDQLSEFLDVLEPP). A disordered region spans residues 2001–2096 (HKARGEGGGS…GSPGAGSAGR (96 aa)). Acidic residues predominate over residues 2021–2035 (GDPDAGDPAPDEATD). The segment covering 2068–2088 (AAAAAAAAAAAAAAGTTTAGS) has biased composition (low complexity).

The protein belongs to the sodium channel (TC 1.A.1.10) family. Para subfamily.

It is found in the cell membrane. In terms of biological role, mediates the voltage-dependent sodium ion permeability of excitable membranes. Assuming opened or closed conformations in response to the voltage difference across the membrane, the protein forms a sodium-selective channel through which Na(+) ions may pass in accordance with their electrochemical gradient. The sequence is that of Sodium channel protein para (para) from Drosophila melanogaster (Fruit fly).